Reading from the N-terminus, the 825-residue chain is Exocyst complex component SEC10a (825 aa).

Residues 244-266 (RGLEVAVANLQDYCNELENRLLS) adopt a coiled-coil conformation.

It belongs to the SEC10 family. As to quaternary structure, the exocyst complex is composed of SEC3, SEC5, SEC6, SEC8, SEC10, EXO70A1 and EXO84B. Interacts with EXO84B. Binds to EXO70E2. Binds directly to B1L. In terms of tissue distribution, expressed in seedlings, roots, leaves and flowers.

The protein resides in the cytoplasm. It is found in the cytosol. Its subcellular location is the secreted. The protein localises to the extracellular exosome. Functionally, component of the exocyst complex involved in the docking of exocytic vesicles with fusion sites on the plasma membrane during regulated or polarized secretion. Involved in polarized cell growth and organ morphogenesis. During cytokinesis, involved in cell plate initiation, cell plate maturation and formation of new primary cell wall. This is Exocyst complex component SEC10a from Arabidopsis thaliana (Mouse-ear cress).